The following is a 295-amino-acid chain: uncharacterized protein (295 aa).

Residues 151 to 290 (RTAVCARLSS…RAVAAAARAG (140 aa)) form the Resolvase/invertase-type recombinase catalytic domain. Ser159 functions as the O-(5'-phospho-DNA)-serine intermediate in the catalytic mechanism.

This is an uncharacterized protein from Mycobacterium bovis (strain ATCC BAA-935 / AF2122/97).